The following is a 478-amino-acid chain: Cytochrome c-552 (478 aa).

An N-terminal signal peptide occupies residues 1–26 (MTRIKINARRIFSLLIPFFFFTSVHA). Heme c is bound at residue H94. Residues C122, C125, and K126 each coordinate heme. Heme c-binding residues include C160, C163, H164, C209, C212, and H213. E215, Y216, K261, and Q263 together coordinate Ca(2+). Y216 is a substrate binding site. H264 serves as a coordination point for substrate. 9 residues coordinate heme c: H275, C282, C285, H286, H301, C314, C317, H318, and H393.

This sequence belongs to the cytochrome c-552 family. It depends on Ca(2+) as a cofactor. Requires heme c as cofactor.

It localises to the periplasm. The enzyme catalyses 6 Fe(III)-[cytochrome c] + NH4(+) + 2 H2O = 6 Fe(II)-[cytochrome c] + nitrite + 8 H(+). Its pathway is nitrogen metabolism; nitrate reduction (assimilation). In terms of biological role, catalyzes the reduction of nitrite to ammonia, consuming six electrons in the process. This Escherichia coli O6:H1 (strain CFT073 / ATCC 700928 / UPEC) protein is Cytochrome c-552.